The chain runs to 905 residues: MTDKYSSNLVPVNIEDEMKASYLDYAMSVIVSRAIPDVRDGLKPVHRRIIYSMYEAGNHASKPYRKSARIVGDVMGKYHPHGDSAIYDSLVRMTQDFSLRLPLVDGQGNFGSMDGDAAAAMRYTESRMSKVAHKLVEDIDKGTVSFNINYDGSEEEPSVLPAMFPNLLVNGSGGIAVGMATNIPPHNLGEIIDACCLYIDNNDIEILDLLEVVKGPDFPTGSMILGISGIRSAYLTGRGSIIMRGKAEIENIGNSRQAIIITEIPYMVNKARLVEKIAEMVKEKRIEGISDLRDESNKNGVRIFIELKKDVVAEVVLNQIYACTQLQTNFGVIMLALKDGLPKVMNLKEVIAAFVSFREVVITNRTIYLLNKARDRAHILLGLAIAISNIDEIIYIIKASNDTNLAKQELMDRQWEVLDILPLIKLVDDKVMLNERGKLSFTEVQAKAILEMKLQRLTAMEKNKLEQDLKHLATEIAEYLNILDSRTRLLEILKEELIKVKEEFAVPRLTAIEFGEFDQDIEDLIQREEMVVTVTLGGYIKRVPLSSYRSQKRGGKGRSGLSMRDEDITMQVFVGSTHTPMLFFSNIGKVYSLKLYKLPLSNPQGKGRPMVNILPLQENEHITNIMPLPENQDEWDHLNIMFATAKGNIRRSDLLDFKKIQLNGKIAIRLDEDDKLIDVKPCKEDEHILLATKAGKALRFPVESLRIIKSRISDGVRGMKLAKEDSVISMTVLKGINSTKEDRDAYLTVPWEKRLKIAKGEEFNLEALGVHLNADSILEMANSEEFILTVTENGFGKRSSAYGYRITDRGGSGIINMDINDKTGLVVGVMPVKMDDELMLITNSGKLIRCKLESVRITGRNTSGVILFKLDDDEKVVSVSLIAETSESGEDSELVEDGLESAENM.

Positions 35-524 constitute a Topo IIA-type catalytic domain; sequence IPDVRDGLKP…GEFDQDIEDL (490 aa). Y123 serves as the catalytic O-(5'-phospho-DNA)-tyrosine intermediate. Positions 551-557 match the GyrA-box motif; the sequence is QKRGGKG.

This sequence belongs to the type II topoisomerase GyrA/ParC subunit family. As to quaternary structure, heterotetramer, composed of two GyrA and two GyrB chains. In the heterotetramer, GyrA contains the active site tyrosine that forms a transient covalent intermediate with DNA, while GyrB binds cofactors and catalyzes ATP hydrolysis.

The protein localises to the cytoplasm. The catalysed reaction is ATP-dependent breakage, passage and rejoining of double-stranded DNA.. Its function is as follows. A type II topoisomerase that negatively supercoils closed circular double-stranded (ds) DNA in an ATP-dependent manner to modulate DNA topology and maintain chromosomes in an underwound state. Negative supercoiling favors strand separation, and DNA replication, transcription, recombination and repair, all of which involve strand separation. Also able to catalyze the interconversion of other topological isomers of dsDNA rings, including catenanes and knotted rings. Type II topoisomerases break and join 2 DNA strands simultaneously in an ATP-dependent manner. This chain is DNA gyrase subunit A, found in Rickettsia typhi (strain ATCC VR-144 / Wilmington).